Here is a 469-residue protein sequence, read N- to C-terminus: Putative pyridoxal-dependent decarboxylase domain-containing protein 2 (469 aa).

Positions 12 to 40 form a coiled coil; the sequence is TLAEMGKNLKEAVKMLEDSQRRTEEENGK. Residues 28–44 show a composition bias toward basic and acidic residues; the sequence is EDSQRRTEEENGKKLIS. The disordered stretch occupies residues 28–47; that stretch reads EDSQRRTEEENGKKLISRDI.

Belongs to the group II decarboxylase family. Pyridoxal 5'-phosphate is required as a cofactor.

The chain is Putative pyridoxal-dependent decarboxylase domain-containing protein 2 (PDXDC2P) from Homo sapiens (Human).